Consider the following 343-residue polypeptide: tRNA N6-adenosine threonylcarbamoyltransferase (343 aa).

The Fe cation site is built by histidine 115 and histidine 119. Residues 137-141, aspartate 170, glycine 183, aspartate 187, and asparagine 276 contribute to the substrate site; that span reads LVSGG. Aspartate 306 serves as a coordination point for Fe cation.

It belongs to the KAE1 / TsaD family. The cofactor is Fe(2+).

The protein localises to the cytoplasm. It catalyses the reaction L-threonylcarbamoyladenylate + adenosine(37) in tRNA = N(6)-L-threonylcarbamoyladenosine(37) in tRNA + AMP + H(+). Its function is as follows. Required for the formation of a threonylcarbamoyl group on adenosine at position 37 (t(6)A37) in tRNAs that read codons beginning with adenine. Is involved in the transfer of the threonylcarbamoyl moiety of threonylcarbamoyl-AMP (TC-AMP) to the N6 group of A37, together with TsaE and TsaB. TsaD likely plays a direct catalytic role in this reaction. The protein is tRNA N6-adenosine threonylcarbamoyltransferase of Limosilactobacillus reuteri (strain DSM 20016) (Lactobacillus reuteri).